A 2563-amino-acid chain; its full sequence is Compactin diketide synthase mlcB (2563 aa).

The 422-residue stretch at 29–450 (STPIAIVGMG…GSNAHVILES (422 aa)) folds into the Ketosynthase family 3 (KS3) domain. Residues C202, H337, and H372 each act as for beta-ketoacyl synthase activity in the active site. The acyl and malonyl transferase stretch occupies residues 568–915 (VFTGQGAQWH…TELISKGYGL (348 aa)). The active-site For malonyltransferase activity is the S658. Residues 951–960 (EPRGSRESKQ) show a composition bias toward basic and acidic residues. Residues 951–971 (EPRGSRESKQRTHPPHTLIGS) form a disordered region. The N-terminal hotdog fold stretch occupies residues 966 to 1103 (HTLIGSRESL…GLIRSESERS (138 aa)). In terms of domain architecture, PKS/mFAS DH spans 966-1284 (HTLIGSRESL…FQSVGSSFSD (319 aa)). H998 serves as the catalytic Proton acceptor; for dehydratase activity. The tract at residues 998-1010 (HVVGSSIIFPGAG) is dehydratase-like. The segment at 1121–1284 (DNRSIDPNDL…FQSVGSSFSD (164 aa)) is C-terminal hotdog fold. The active-site Proton donor; for dehydratase activity is D1187. Residues 1542–1579 (YDVVVACQVLHATRCMKRTLSNVRKLLKPGGNLILVET) are methyltransferase. One can recognise a Carrier domain in the interval 2485-2562 (EAISIVLKAM…GLVELVVAKC (78 aa)). At S2522 the chain carries O-(pantetheine 4'-phosphoryl)serine.

Pantetheine 4'-phosphate is required as a cofactor.

It catalyses the reaction holo-[2-methylbutanoate polyketide synthase] + 2 malonyl-CoA + S-adenosyl-L-methionine + 2 NADPH + 3 H(+) = (S)-2-methylbutanoyl-[2-methylbutanoate polyketide synthase] + S-adenosyl-L-homocysteine + 2 CO2 + 2 NADP(+) + 2 CoA + H2O. It participates in polyketide biosynthesis. Functionally, diketide synthase; part of the gene cluster that mediates the biosynthesis of compactin, also known as mevastatin or ML-236B, and which acts as a potent competitive inhibitor of HMG-CoA reductase. Compactin biosynthesis is performed in two stages. The first stage is catalyzed by the nonaketide synthase mlcA, which belongs to type I polyketide synthases and catalyzes the iterative nine-step formation of the polyketide. This PKS stage is completed by the action of dehydrogenase mlcG, which catalyzes the NADPH-dependent reduction of the unsaturated tetra-, penta- and heptaketide intermediates that arise during the mlcA-mediated biosynthesis of the nonaketide chain and leads to dihydro-ML-236C carboxylate. Covalently bound dihydro-ML-236C carboxylate is released from mlcA by the mlcF esterase. Conversion of dihydro-ML-236C carboxylate into ML-236A carboxylate is subsequently performed with the participation of molecular oxygen and P450 monoogygenase mlcC. Finally, mlcH performs the conversion of ML-236A carboxylate to ML-236B/compactin carboxylate through the addition of the side-chain diketide moiety produced by the diketide synthase mlcB. The protein is Compactin diketide synthase mlcB (mlcB) of Penicillium citrinum.